Here is a 719-residue protein sequence, read N- to C-terminus: Delta-1-pyrroline-5-carboxylate synthase (719 aa).

A glutamate 5-kinase region spans residues 1 to 293; that stretch reads MDATRAFVKD…WVQVKETGVR (293 aa). Positions 57, 154, and 173 each coordinate substrate. ATP contacts are provided by residues 193-194 and 233-239; these read SD and RGGMTAK. The gamma-glutamyl phosphate reductase stretch occupies residues 294-719; sequence DMAVAARESS…KDLPLVAQNS (426 aa).

In the N-terminal section; belongs to the glutamate 5-kinase family. The protein in the C-terminal section; belongs to the gamma-glutamyl phosphate reductase family. As to expression, expressed at high levels in leaves and is inducible in roots subjected to salt stress.

It carries out the reaction L-glutamate + ATP = L-glutamyl 5-phosphate + ADP. The enzyme catalyses L-glutamate 5-semialdehyde + phosphate + NADP(+) = L-glutamyl 5-phosphate + NADPH + H(+). The protein operates within amino-acid biosynthesis; L-proline biosynthesis; L-glutamate 5-semialdehyde from L-glutamate: step 1/2. It functions in the pathway amino-acid biosynthesis; L-proline biosynthesis; L-glutamate 5-semialdehyde from L-glutamate: step 2/2. Feedback regulated by proline. Functionally, P5CS plays a key role in proline biosynthesis, leading to osmoregulation in plants. The polypeptide is Delta-1-pyrroline-5-carboxylate synthase (P5CS) (Mesembryanthemum crystallinum (Common ice plant)).